Consider the following 261-residue polypeptide: Indole-3-glycerol phosphate synthase (261 aa).

It belongs to the TrpC family.

The catalysed reaction is 1-(2-carboxyphenylamino)-1-deoxy-D-ribulose 5-phosphate + H(+) = (1S,2R)-1-C-(indol-3-yl)glycerol 3-phosphate + CO2 + H2O. The protein operates within amino-acid biosynthesis; L-tryptophan biosynthesis; L-tryptophan from chorismate: step 4/5. The polypeptide is Indole-3-glycerol phosphate synthase (Burkholderia lata (strain ATCC 17760 / DSM 23089 / LMG 22485 / NCIMB 9086 / R18194 / 383)).